We begin with the raw amino-acid sequence, 190 residues long: MNEKDNQTTSEPENEQEIIDVNDSGEQPEENETEQPQEEAVENDEIAKLQQEKDETYNRLVRLQAEFDNYKRRTLKEREADRKYKSQDLITELLPAIDNFERALQVEVTEENKSIIDGIMMVYRQLQEALTSQGVEPIKTEGEVFDPNLHHAVMQIEDENMDSNTVVEELQKGYQLKDRVIRPAMVKVNK.

Positions 1-42 (MNEKDNQTTSEPENEQEIIDVNDSGEQPEENETEQPQEEAVE) are disordered. Residues 26 to 42 (EQPEENETEQPQEEAVE) are compositionally biased toward acidic residues.

Belongs to the GrpE family. As to quaternary structure, homodimer.

It localises to the cytoplasm. Functionally, participates actively in the response to hyperosmotic and heat shock by preventing the aggregation of stress-denatured proteins, in association with DnaK and GrpE. It is the nucleotide exchange factor for DnaK and may function as a thermosensor. Unfolded proteins bind initially to DnaJ; upon interaction with the DnaJ-bound protein, DnaK hydrolyzes its bound ATP, resulting in the formation of a stable complex. GrpE releases ADP from DnaK; ATP binding to DnaK triggers the release of the substrate protein, thus completing the reaction cycle. Several rounds of ATP-dependent interactions between DnaJ, DnaK and GrpE are required for fully efficient folding. This chain is Protein GrpE, found in Oceanobacillus iheyensis (strain DSM 14371 / CIP 107618 / JCM 11309 / KCTC 3954 / HTE831).